The primary structure comprises 404 residues: MQHPKKVVLAYSGGVDTSVCIPYLKNEYGISEVITFVADLGQGDDIESISQKALNSGATKSVIGNLVEDFVEKYAFPAIRANALYGEKYPLSTALARPLIAENLVKLARKLNAGAVAHGCTGKGNDQVRFDLAINALGPDLEIITPAREWKMSREEAILYGEKFGIPAPVSKKSPYSIDVNLLGRSVEAGFLEDPMQEPNEEVFAMTSSIDDSPNYPKDIEITFKNGFPIAIGNESLSPLKIIQKVNYLAGKNGFGRIDMIEDRVVGIKSREIYEAPGLLLLIKAHKELESITLNPDVLDFKNLVEKKWAQLVYQGFWFGPLKKALDGFIDATQTSVNGKVKIRLHKGNAIIIGRSSENNSLYREDLATYSKDDIFDHKQAEGFIYMWGMSNKIWAELNSKMNN.

ATP-binding positions include 10–18 (AYSGGVDTS) and alanine 38. Tyrosine 89 contacts L-citrulline. Glycine 119 serves as a coordination point for ATP. Residues threonine 121, asparagine 125, and aspartate 126 each coordinate L-aspartate. Asparagine 125 is an L-citrulline binding site. The L-citrulline site is built by arginine 129, serine 177, serine 186, glutamate 262, and tyrosine 274.

This sequence belongs to the argininosuccinate synthase family. Type 1 subfamily. Homotetramer.

It localises to the cytoplasm. It catalyses the reaction L-citrulline + L-aspartate + ATP = 2-(N(omega)-L-arginino)succinate + AMP + diphosphate + H(+). It participates in amino-acid biosynthesis; L-arginine biosynthesis; L-arginine from L-ornithine and carbamoyl phosphate: step 2/3. This Prochlorococcus marinus (strain MIT 9515) protein is Argininosuccinate synthase.